Reading from the N-terminus, the 410-residue chain is E3 ubiquitin-protein ligase MARCHF4 (410 aa).

The signal sequence occupies residues 1-18; sequence MLMPLCGLLWWWWCCCSG. Residues 92–136 are disordered; it reads GPREVVGREPPPVPPPPPLPPSSVEDDWGGPATEPPASLLSSASS. Residues 100–112 show a composition bias toward pro residues; that stretch reads EPPPVPPPPPLPP. Residues 126 to 136 are compositionally biased toward low complexity; sequence PPASLLSSASS. An RING-CH-type zinc finger spans residues 155 to 215; sequence DSGMRTPLCR…ELCYYKYHVI (61 aa). Residues Cys163, Cys166, Cys179, Cys181, His189, Cys192, Cys205, and Cys208 each contribute to the Zn(2+) site. 2 helical membrane passes run 238-258 and 272-292; these read VAAA…LIWS and LFQI…GLII. Disordered regions lie at residues 324–372 and 390–410; these read EDQK…SGPL and PHEQ…VTTV. A compositionally biased stretch (polar residues) spans 333–346; the sequence is NPRTSSSTQANIPS. The span at 352-366 shows a compositional bias: low complexity; it reads AGTPAPEQGPAQAAG.

In terms of tissue distribution, expressed in brain and placenta.

The protein resides in the golgi apparatus membrane. The enzyme catalyses S-ubiquitinyl-[E2 ubiquitin-conjugating enzyme]-L-cysteine + [acceptor protein]-L-lysine = [E2 ubiquitin-conjugating enzyme]-L-cysteine + N(6)-ubiquitinyl-[acceptor protein]-L-lysine.. It participates in protein modification; protein ubiquitination. Its function is as follows. E3 ubiquitin-protein ligase that may mediate ubiquitination of MHC-I and CD4, and promote their subsequent endocytosis and sorting to lysosomes via multivesicular bodies. E3 ubiquitin ligases accept ubiquitin from an E2 ubiquitin-conjugating enzyme in the form of a thioester and then directly transfer the ubiquitin to targeted substrates. The protein is E3 ubiquitin-protein ligase MARCHF4 of Homo sapiens (Human).